Reading from the N-terminus, the 433-residue chain is Tol-Pal system protein TolB (433 aa).

The N-terminal stretch at 1 to 21 is a signal peptide; sequence MINLFRGLLVVLCFASAMVAA.

This sequence belongs to the TolB family. In terms of assembly, the Tol-Pal system is composed of five core proteins: the inner membrane proteins TolA, TolQ and TolR, the periplasmic protein TolB and the outer membrane protein Pal. They form a network linking the inner and outer membranes and the peptidoglycan layer.

It localises to the periplasm. Its function is as follows. Part of the Tol-Pal system, which plays a role in outer membrane invagination during cell division and is important for maintaining outer membrane integrity. The sequence is that of Tol-Pal system protein TolB from Pseudomonas syringae pv. tomato (strain ATCC BAA-871 / DC3000).